The following is a 242-amino-acid chain: Acetoacetyl-CoA reductase (242 aa).

NADP(+) is bound by residues 12–14 (RGI) and 82–86 (NAGIT). Substrate-binding positions include aspartate 88 and 141-144 (QAGQ). The Proton acceptor role is filled by tyrosine 147. 177 to 180 (PGYI) contributes to the NADP(+) binding site. 178 to 179 (GY) provides a ligand contact to substrate.

Belongs to the short-chain dehydrogenases/reductases (SDR) family.

It is found in the cytoplasm. The catalysed reaction is a (3R)-3-hydroxyacyl-CoA + NADP(+) = a 3-oxoacyl-CoA + NADPH + H(+). The protein operates within biopolymer metabolism; poly-(R)-3-hydroxybutanoate biosynthesis. The chain is Acetoacetyl-CoA reductase (phaB) from Paracoccus denitrificans.